Consider the following 72-residue polypeptide: MARARKGALVQCDPSIKALILQIDAKMSDIVLEELDDTHLLVNPSKVEFVKHELNRLLSKNIYNPMDEEENQ.

The protein belongs to the TFB5 family. In terms of assembly, component of the 7-subunit TFIIH core complex composed of XPB/SSL2, XPD/RAD3, SSL1, TFB1, TFB2, TFB4 and TFB5, which is active in NER. The core complex associates with the 3-subunit CTD-kinase module TFIIK composed of CCL1, KIN28 and TFB3 to form the 10-subunit holoenzyme (holo-TFIIH) active in transcription. An additionnal subunit, TFB6, plays a role in the dissociation of the SSL2 helicase from TFIIH after transcription initiation. Interacts with TFB2.

It is found in the nucleus. Component of the general transcription and DNA repair factor IIH (TFIIH) core complex, which is involved in general and transcription-coupled nucleotide excision repair (NER) of damaged DNA and, when complexed to TFIIK, in RNA transcription by RNA polymerase II. In NER, TFIIH acts by opening DNA around the lesion to allow the excision of the damaged oligonucleotide and its replacement by a new DNA fragment. In transcription, TFIIH has an essential role in transcription initiation. When the pre-initiation complex (PIC) has been established, TFIIH is required for promoter opening and promoter escape. Phosphorylation of the C-terminal tail (CTD) of the largest subunit of RNA polymerase II by the kinase module TFIIK controls the initiation of transcription. TFB5 is required for stable recruitment of TFIIH to a promoter, but not for stability of TFIIH subunits. This Saccharomyces cerevisiae (strain ATCC 204508 / S288c) (Baker's yeast) protein is General transcription and DNA repair factor IIH subunit TFB5 (TFB5).